The following is a 669-amino-acid chain: DNA ligase (669 aa).

Residues 34 to 38 (DAEYD), 83 to 84 (SL), and Glu-113 contribute to the NAD(+) site. Lys-115 functions as the N6-AMP-lysine intermediate in the catalytic mechanism. Residues Arg-136, Glu-170, Lys-286, and Lys-310 each contribute to the NAD(+) site. Residues Cys-404, Cys-407, Cys-422, and Cys-427 each coordinate Zn(2+). Residues 591–669 (IADSPFAGKT…EEALVKAISH (79 aa)) enclose the BRCT domain.

The protein belongs to the NAD-dependent DNA ligase family. LigA subfamily. Mg(2+) is required as a cofactor. It depends on Mn(2+) as a cofactor.

It catalyses the reaction NAD(+) + (deoxyribonucleotide)n-3'-hydroxyl + 5'-phospho-(deoxyribonucleotide)m = (deoxyribonucleotide)n+m + AMP + beta-nicotinamide D-nucleotide.. Its function is as follows. DNA ligase that catalyzes the formation of phosphodiester linkages between 5'-phosphoryl and 3'-hydroxyl groups in double-stranded DNA using NAD as a coenzyme and as the energy source for the reaction. It is essential for DNA replication and repair of damaged DNA. The sequence is that of DNA ligase from Halalkalibacterium halodurans (strain ATCC BAA-125 / DSM 18197 / FERM 7344 / JCM 9153 / C-125) (Bacillus halodurans).